The sequence spans 227 residues: Neuromodulin (227 aa).

The interval 1 to 227 is disordered; it reads MLCCMRRTKQ…EDPEADQEHA (227 aa). S-palmitoyl cysteine attachment occurs at residues Cys3 and Cys4. Residues 9–32 are compositionally biased toward basic and acidic residues; sequence KQVEKNDEDQKIEQDGVKPEDKAH. One can recognise an IQ domain in the interval 31–60; the sequence is AHKAATKIQASFRGHITRKKLKGEKKGDAP. Position 41 is a phosphoserine; by PHK (Ser41). A compositionally biased stretch (basic and acidic residues) spans 54–84; the sequence is EKKGDAPAAEAEAKEKDDAPVADGVEKKEGD. The segment covering 85–97 has biased composition (low complexity); the sequence is GSATTDAAPATSP. Phosphoserine is present on residues Ser86 and Ser96. Over residues 98-127 the composition is skewed to basic and acidic residues; that stretch reads KAEEPSKAGDAPSEEKKGEGDAAPSEEKAG. Low complexity predominate over residues 128-139; that stretch reads SAETESAAKATT. Residue Thr138 is modified to Phosphothreonine. Ser142, Ser144, and Ser145 each carry phosphoserine. Over residues 146–158 the composition is skewed to basic and acidic residues; that stretch reads KAEDGPAKEEPKQ. Low complexity predominate over residues 159 to 193; it reads ADVPAAVTDAAATTPAAEDAATKAAQPPTETAESS. Position 172 is a phosphothreonine (Thr172). Phosphoserine; by CK2 occurs at positions 192 and 193. Over residues 202 to 215 the composition is skewed to basic and acidic residues; it reads VDEAKPKESARQDE. Residues 216-227 are compositionally biased toward acidic residues; it reads GKEDPEADQEHA.

This sequence belongs to the neuromodulin family. In terms of assembly, identified in a complex containing FGFR4, NCAM1, CDH2, PLCG1, FRS2, SRC, SHC1, GAP43 and CTTN. Interacts (via IQ domain) with calmodulin. Binds calmodulin with a greater affinity in the absence of Ca(2+) than in its presence. Post-translationally, phosphorylated. Phosphorylation of this protein by a protein kinase C is specifically correlated with certain forms of synaptic plasticity. Palmitoylated by ZDHHC3. Palmitoylation is regulated by ARF6 and is essential for plasma membrane association and axonal and dendritic filopodia induction. Deacylated by LYPLA2. As to expression, expressed in the hippocampus (at protein level). Expressed in the dorsal root ganglion and the spinal cord (at protein level).

The protein localises to the cell membrane. Its subcellular location is the cell projection. It is found in the growth cone membrane. It localises to the synapse. The protein resides in the filopodium membrane. The protein localises to the perikaryon. Its subcellular location is the dendrite. It is found in the axon. It localises to the cytoplasm. Its function is as follows. This protein is associated with nerve growth. It is a major component of the motile 'growth cones' that form the tips of elongating axons. Plays a role in axonal and dendritic filopodia induction. The sequence is that of Neuromodulin (Gap43) from Mus musculus (Mouse).